The primary structure comprises 246 residues: Probable transcriptional regulatory protein CKO_01097 (246 aa).

Residues 1–20 (MAGHSKWANTRHRKAAQDAK) form a disordered region.

The protein belongs to the TACO1 family.

It is found in the cytoplasm. This Citrobacter koseri (strain ATCC BAA-895 / CDC 4225-83 / SGSC4696) protein is Probable transcriptional regulatory protein CKO_01097.